Reading from the N-terminus, the 910-residue chain is DNA mismatch repair protein MutS (910 aa).

The segment covering 1 to 11 (MEAKVEEKEPE) has biased composition (basic and acidic residues). The interval 1–21 (MEAKVEEKEPEPVENAGPDAP) is disordered. ATP is bound at residue 658-665 (GPNMGGKS).

The protein belongs to the DNA mismatch repair MutS family.

In terms of biological role, this protein is involved in the repair of mismatches in DNA. It is possible that it carries out the mismatch recognition step. This protein has a weak ATPase activity. This Brucella melitensis biotype 1 (strain ATCC 23456 / CCUG 17765 / NCTC 10094 / 16M) protein is DNA mismatch repair protein MutS.